The sequence spans 503 residues: ATP synthase subunit alpha (503 aa).

Glycine 170–threonine 177 serves as a coordination point for ATP.

In terms of assembly, F-type ATPases have 2 components, CF(1) - the catalytic core - and CF(0) - the membrane proton channel. CF(1) has five subunits: alpha(3), beta(3), gamma(1), delta(1), epsilon(1). CF(0) has four main subunits: a(1), b(1), b'(1) and c(9-12).

Its subcellular location is the cellular thylakoid membrane. The catalysed reaction is ATP + H2O + 4 H(+)(in) = ADP + phosphate + 5 H(+)(out). With respect to regulation, inhibited by dicyclohexylcarbodiimide. Produces ATP from ADP in the presence of a proton gradient across the membrane. The alpha chain is a regulatory subunit. Its function is as follows. The complex from the organism is particularly stable to disruption and remains functional after 6 hrs at 55 degrees Celsius. The polypeptide is ATP synthase subunit alpha (Thermosynechococcus vestitus (strain NIES-2133 / IAM M-273 / BP-1)).